Here is an 878-residue protein sequence, read N- to C-terminus: Protein translocase subunit SecA (878 aa).

ATP-binding positions include Gln81, 99-103 (GEGKT), and Asp489.

Belongs to the SecA family.

The protein resides in the plastid. It localises to the chloroplast stroma. Its subcellular location is the chloroplast thylakoid membrane. It carries out the reaction ATP + H2O + cellular proteinSide 1 = ADP + phosphate + cellular proteinSide 2.. Has a central role in coupling the hydrolysis of ATP to the transfer of proteins across the thylakoid membrane. This is Protein translocase subunit SecA from Thalassiosira pseudonana (Marine diatom).